A 241-amino-acid chain; its full sequence is DNA repair protein RecO (241 aa).

This sequence belongs to the RecO family.

In terms of biological role, involved in DNA repair and RecF pathway recombination. The chain is DNA repair protein RecO from Azobacteroides pseudotrichonymphae genomovar. CFP2.